The following is a 198-amino-acid chain: MTEDWVPKTKLGRLVADGKIKTMDEALASNLPLKEPEIVDILLPDLEDDVLEISMVQRMTDSGRRTKFRVTAVVGNRNGYVGIGTGKASQVAPAIQKAINNAKLNIFKVQRGCGSWECGCGGDHSLPFKVTGTSGSVRVTLIPGPKGLGIVAGDVAKRVIELAGVKDVWSFTKGQTKTTVNFAKATYEALKKTMYVKR.

An S5 DRBM domain is found at 46–109 (LEDDVLEISM…NNAKLNIFKV (64 aa)).

This sequence belongs to the universal ribosomal protein uS5 family. In terms of assembly, part of the 30S ribosomal subunit. Contacts protein S4.

Its function is as follows. With S4 and S12 plays an important role in translational accuracy. This chain is Small ribosomal subunit protein uS5, found in Archaeoglobus fulgidus (strain ATCC 49558 / DSM 4304 / JCM 9628 / NBRC 100126 / VC-16).